The chain runs to 397 residues: Acetate kinase (397 aa).

N8 serves as a coordination point for Mg(2+). K15 contacts ATP. Position 89 (R89) interacts with substrate. D146 functions as the Proton donor/acceptor in the catalytic mechanism. Residues 206 to 210 (HLGNG), 281 to 283 (DLR), and 329 to 333 (GIGEN) each bind ATP. E382 provides a ligand contact to Mg(2+).

This sequence belongs to the acetokinase family. In terms of assembly, homodimer. Mg(2+) serves as cofactor. The cofactor is Mn(2+).

The protein resides in the cytoplasm. It carries out the reaction acetate + ATP = acetyl phosphate + ADP. It functions in the pathway metabolic intermediate biosynthesis; acetyl-CoA biosynthesis; acetyl-CoA from acetate: step 1/2. Functionally, catalyzes the formation of acetyl phosphate from acetate and ATP. Can also catalyze the reverse reaction. In Anoxybacillus flavithermus (strain DSM 21510 / WK1), this protein is Acetate kinase.